The sequence spans 158 residues: SsrA-binding protein (158 aa).

The protein belongs to the SmpB family.

It localises to the cytoplasm. Functionally, required for rescue of stalled ribosomes mediated by trans-translation. Binds to transfer-messenger RNA (tmRNA), required for stable association of tmRNA with ribosomes. tmRNA and SmpB together mimic tRNA shape, replacing the anticodon stem-loop with SmpB. tmRNA is encoded by the ssrA gene; the 2 termini fold to resemble tRNA(Ala) and it encodes a 'tag peptide', a short internal open reading frame. During trans-translation Ala-aminoacylated tmRNA acts like a tRNA, entering the A-site of stalled ribosomes, displacing the stalled mRNA. The ribosome then switches to translate the ORF on the tmRNA; the nascent peptide is terminated with the 'tag peptide' encoded by the tmRNA and targeted for degradation. The ribosome is freed to recommence translation, which seems to be the essential function of trans-translation. This is SsrA-binding protein from Caldicellulosiruptor bescii (strain ATCC BAA-1888 / DSM 6725 / KCTC 15123 / Z-1320) (Anaerocellum thermophilum).